The sequence spans 267 residues: Heme-containing CO-sensing transcriptional regulator RcoM 1 (267 aa).

Residues 15-86 enclose the PAS domain; sequence RAETFQHKLE…KSRDKLRFLL (72 aa). His-74 and Met-104 together coordinate heme. Residues 161–266 form the HTH LytTR-type domain; that stretch reads IPVYRKNRVI…TAQLKELLGV (106 aa).

The cofactor is heme.

The protein resides in the cytoplasm. Functionally, one-component, b-type heme-containing aerobic sensor and transcriptional regulator that responds to CO by activating the expression of the oxidation operon cox. This is Heme-containing CO-sensing transcriptional regulator RcoM 1 (rcoM1) from Paraburkholderia xenovorans (strain LB400).